Consider the following 290-residue polypeptide: Glutamate racemase (290 aa).

Residues 32-33 (DS) and 64-65 (YG) each bind substrate. The active-site Proton donor/acceptor is the C96. 97–98 (NT) is a substrate binding site. The active-site Proton donor/acceptor is C208. 209 to 210 (TH) lines the substrate pocket.

This sequence belongs to the aspartate/glutamate racemases family.

It carries out the reaction L-glutamate = D-glutamate. It functions in the pathway cell wall biogenesis; peptidoglycan biosynthesis. Provides the (R)-glutamate required for cell wall biosynthesis. The sequence is that of Glutamate racemase from Sodalis glossinidius (strain morsitans).